The primary structure comprises 474 residues: PRAME family member 13 (474 aa).

Residues 97–124 (RRKLQVLDLRDVDENFWARWPGAWALSC) form an LRR 1; degenerate repeat. The LRR 2; degenerate repeat unit spans residues 179 to 203 (HLCCSKLVNYLTPIKHLRKSLKIIY). The LRR 3; degenerate repeat unit spans residues 204–230 (LNSIQELEIHNMSWPRLIRKLRCYLKE). The LRR 4; degenerate repeat unit spans residues 231–265 (MKTLGKLVFSRCHHSTSDNELEGRLVTKFSSVFLG). LRR repeat units lie at residues 266–291 (LEHLQLLKIKLITFFSGHLEQLIRCL), 292–323 (QNPLENLELTYGYLLEEDVKCLSQYPSLGYLK), 324–342 (HLNLSYVLLFRISLEPLGA), 348–375 (AASLETLILEGCQIHYSQLSAILPGLSR), and 376–400 (CSQLTTFYFGRNCMSMGALKDLLRH).

This sequence belongs to the PRAME family.

This Homo sapiens (Human) protein is PRAME family member 13.